Consider the following 89-residue polypeptide: Small ribosomal subunit protein uS15 (89 aa).

Positions Met-1–Ser-24 are disordered. Over residues Lys-8–Ser-24 the composition is skewed to polar residues.

It belongs to the universal ribosomal protein uS15 family. As to quaternary structure, part of the 30S ribosomal subunit. Forms a bridge to the 50S subunit in the 70S ribosome, contacting the 23S rRNA.

In terms of biological role, one of the primary rRNA binding proteins, it binds directly to 16S rRNA where it helps nucleate assembly of the platform of the 30S subunit by binding and bridging several RNA helices of the 16S rRNA. Forms an intersubunit bridge (bridge B4) with the 23S rRNA of the 50S subunit in the ribosome. This is Small ribosomal subunit protein uS15 from Synechococcus sp. (strain CC9311).